Here is a 555-residue protein sequence, read N- to C-terminus: Glutamine--tRNA ligase (555 aa).

The short motif at 34-44 is the 'HIGH' region element; sequence PEPNGYLHIGH. Residues 35–37 and 41–47 each bind ATP; these read EPN and HIGHAKS. L-glutamine contacts are provided by Asp67 and Tyr212. ATP is bound by residues Thr231, 261–262, and 269–271; these read RL and MSK. The 'KMSKS' region motif lies at 268–272; sequence VMSKR. An interaction with tRNA region spans residues 317–324; it reads TKQDNTIE.

It belongs to the class-I aminoacyl-tRNA synthetase family. As to quaternary structure, monomer.

Its subcellular location is the cytoplasm. The enzyme catalyses tRNA(Gln) + L-glutamine + ATP = L-glutaminyl-tRNA(Gln) + AMP + diphosphate. The sequence is that of Glutamine--tRNA ligase from Salmonella schwarzengrund (strain CVM19633).